The sequence spans 399 residues: Probable aspartate/prephenate aminotransferase (399 aa).

The L-aspartate site is built by Gly39, Trp125, and Asn175. Lys239 is subject to N6-(pyridoxal phosphate)lysine. L-aspartate is bound at residue Arg375.

The protein belongs to the class-I pyridoxal-phosphate-dependent aminotransferase family. Homodimer. Pyridoxal 5'-phosphate serves as cofactor.

The protein resides in the cytoplasm. It carries out the reaction L-aspartate + 2-oxoglutarate = oxaloacetate + L-glutamate. The catalysed reaction is L-arogenate + 2-oxoglutarate = prephenate + L-glutamate. Functionally, catalyzes the reversible conversion of aspartate and 2-oxoglutarate to glutamate and oxaloacetate. Can also transaminate prephenate in the presence of glutamate. The sequence is that of Probable aspartate/prephenate aminotransferase (aatA) from Rickettsia typhi (strain ATCC VR-144 / Wilmington).